We begin with the raw amino-acid sequence, 114 residues long: Histone H3-7 (114 aa).

Residues 1–17 (NTGGKAPRKHIAHKQAK) show a composition bias toward basic residues. Residues 1–32 (NTGGKAPRKHIAHKQAKKSSAAAATGGVKKPH) form a disordered region. Positions 18–28 (KSSAAAATGGV) are enriched in low complexity.

This sequence belongs to the histone H3 family. In terms of assembly, the nucleosome is a histone octamer containing two molecules each of H2A, H2B, H3 and H4 assembled in one H3-H4 heterotetramer and two H2A-H2B heterodimers. The octamer wraps approximately 147 bp of DNA.

The protein resides in the nucleus. Its subcellular location is the chromosome. Its function is as follows. Core component of nucleosome. Nucleosomes wrap and compact DNA into chromatin, limiting DNA accessibility to the cellular machineries which require DNA as a template. Histones thereby play a central role in transcription regulation, DNA repair, DNA replication and chromosomal stability. DNA accessibility is regulated via a complex set of post-translational modifications of histones, also called histone code, and nucleosome remodeling. The polypeptide is Histone H3-7 (H3-7) (Stylonychia lemnae (Ciliate)).